The sequence spans 88 residues: Sec-independent protein translocase protein TatA (88 aa).

A helical transmembrane segment spans residues Met1–Gly21. Positions Met43–Ala88 are disordered. Basic and acidic residues predominate over residues Glu46–Ala57. The segment covering Gln62–Ala76 has biased composition (polar residues). Basic and acidic residues predominate over residues Thr77–Ala88.

Belongs to the TatA/E family. As to quaternary structure, the Tat system comprises two distinct complexes: a TatABC complex, containing multiple copies of TatA, TatB and TatC subunits, and a separate TatA complex, containing only TatA subunits. Substrates initially bind to the TatABC complex, which probably triggers association of the separate TatA complex to form the active translocon.

The protein resides in the cell inner membrane. In terms of biological role, part of the twin-arginine translocation (Tat) system that transports large folded proteins containing a characteristic twin-arginine motif in their signal peptide across membranes. TatA could form the protein-conducting channel of the Tat system. The sequence is that of Sec-independent protein translocase protein TatA from Shewanella oneidensis (strain ATCC 700550 / JCM 31522 / CIP 106686 / LMG 19005 / NCIMB 14063 / MR-1).